The chain runs to 282 residues: DegV domain-containing protein SpyM3_0586 (282 aa).

The DegV domain occupies 3–280; it reads LAVITDSTAT…EGAIAFGVTP (278 aa). 2 residues coordinate hexadecanoate: Thr-61 and Ser-94.

Functionally, may bind long-chain fatty acids, such as palmitate, and may play a role in lipid transport or fatty acid metabolism. The chain is DegV domain-containing protein SpyM3_0586 from Streptococcus pyogenes serotype M3 (strain ATCC BAA-595 / MGAS315).